Reading from the N-terminus, the 166-residue chain is Phospholipase A2 inhibitor A1 (166 aa).

The first 19 residues, 1–19 (MRLILLSGLLLLGIFLANG), serve as a signal peptide directing secretion. A C-type lectin domain is found at 46 to 161 (LKGSFLIVHK…CDDNLLVVCE (116 aa)). 2 disulfides stabilise this stretch: C83-C160 and C138-C152. N-linked (GlcNAc...) asparagine glycosylation is present at N122.

The protein belongs to the alpha-type phospholipase A2 inhibitor family. Homotrimer; non-covalently linked. As to expression, expressed by the liver.

It is found in the secreted. Functionally, this phospholipase A2 inhibitor binds directly phospholipase A2 in the presence or absence of calcium. The polypeptide is Phospholipase A2 inhibitor A1 (Bothrops neuwiedi (Neuwied's lancehead)).